A 256-amino-acid polypeptide reads, in one-letter code: 5-oxoprolinase subunit A (256 aa).

It belongs to the LamB/PxpA family. Forms a complex composed of PxpA, PxpB and PxpC.

The enzyme catalyses 5-oxo-L-proline + ATP + 2 H2O = L-glutamate + ADP + phosphate + H(+). Its function is as follows. Catalyzes the cleavage of 5-oxoproline to form L-glutamate coupled to the hydrolysis of ATP to ADP and inorganic phosphate. The polypeptide is 5-oxoprolinase subunit A (Alkaliphilus metalliredigens (strain QYMF)).